The chain runs to 102 residues: NADH-quinone oxidoreductase subunit K (102 aa).

3 helical membrane passes run 6-26 (LEHG…GVMV), 30-50 (LLFM…AFVL), and 62-82 (IMFI…LAIV).

It belongs to the complex I subunit 4L family. As to quaternary structure, NDH-1 is composed of 14 different subunits. Subunits NuoA, H, J, K, L, M, N constitute the membrane sector of the complex.

Its subcellular location is the cell inner membrane. It catalyses the reaction a quinone + NADH + 5 H(+)(in) = a quinol + NAD(+) + 4 H(+)(out). Functionally, NDH-1 shuttles electrons from NADH, via FMN and iron-sulfur (Fe-S) centers, to quinones in the respiratory chain. The immediate electron acceptor for the enzyme in this species is believed to be ubiquinone. Couples the redox reaction to proton translocation (for every two electrons transferred, four hydrogen ions are translocated across the cytoplasmic membrane), and thus conserves the redox energy in a proton gradient. This is NADH-quinone oxidoreductase subunit K from Acinetobacter baylyi (strain ATCC 33305 / BD413 / ADP1).